The following is a 307-amino-acid chain: Ubiquitin recognition factor in ER-associated degradation protein 1 (307 aa).

At Met1 the chain carries N-acetylmethionine. Ser129, Ser231, Ser245, Ser247, and Ser299 each carry phosphoserine. Disordered stretches follow at residues 230-255 and 282-307; these read GSGNRLDGKKKGVEPSPSPIKPGDIK and EEDEAGGRFVAFSGEGQSLRKKGRKP.

This sequence belongs to the UFD1 family. Interacts with USP13. Heterodimer with NPLOC4, this heterodimer binds VCP and inhibits Golgi membrane fusion. Interacts with ZFAND2B; probably through VCP.

It localises to the nucleus. It is found in the cytoplasm. Its subcellular location is the cytosol. It functions in the pathway protein degradation; proteasomal ubiquitin-dependent pathway. Its function is as follows. Essential component of the ubiquitin-dependent proteolytic pathway which degrades ubiquitin fusion proteins. The ternary complex containing UFD1, VCP and NPLOC4 binds ubiquitinated proteins and is necessary for the export of misfolded proteins from the ER to the cytoplasm, where they are degraded by the proteasome. The NPLOC4-UFD1-VCP complex regulates spindle disassembly at the end of mitosis and is necessary for the formation of a closed nuclear envelope. It may be involved in the development of some ectoderm-derived structures. Acts as a negative regulator of type I interferon production via the complex formed with VCP and NPLOC4, which binds to RIGI and recruits RNF125 to promote ubiquitination and degradation of RIGI. This is Ubiquitin recognition factor in ER-associated degradation protein 1 from Rattus norvegicus (Rat).